The primary structure comprises 297 residues: Ribosomal protein L11 methyltransferase (297 aa).

4 residues coordinate S-adenosyl-L-methionine: threonine 150, glycine 171, aspartate 193, and asparagine 233.

Belongs to the methyltransferase superfamily. PrmA family.

It is found in the cytoplasm. The catalysed reaction is L-lysyl-[protein] + 3 S-adenosyl-L-methionine = N(6),N(6),N(6)-trimethyl-L-lysyl-[protein] + 3 S-adenosyl-L-homocysteine + 3 H(+). Functionally, methylates ribosomal protein L11. The polypeptide is Ribosomal protein L11 methyltransferase (Laribacter hongkongensis (strain HLHK9)).